The sequence spans 266 residues: 3-methyl-2-oxobutanoate hydroxymethyltransferase (266 aa).

Residues Asp-46 and Asp-85 each coordinate Mg(2+). 3-methyl-2-oxobutanoate-binding positions include 46–47, Asp-85, and Lys-115; that span reads DS. Glu-117 provides a ligand contact to Mg(2+). Glu-183 functions as the Proton acceptor in the catalytic mechanism.

This sequence belongs to the PanB family. In terms of assembly, homodecamer; pentamer of dimers. The cofactor is Mg(2+).

Its subcellular location is the cytoplasm. The catalysed reaction is 3-methyl-2-oxobutanoate + (6R)-5,10-methylene-5,6,7,8-tetrahydrofolate + H2O = 2-dehydropantoate + (6S)-5,6,7,8-tetrahydrofolate. Its pathway is cofactor biosynthesis; (R)-pantothenate biosynthesis; (R)-pantoate from 3-methyl-2-oxobutanoate: step 1/2. Its function is as follows. Catalyzes the reversible reaction in which hydroxymethyl group from 5,10-methylenetetrahydrofolate is transferred onto alpha-ketoisovalerate to form ketopantoate. This Trichlorobacter lovleyi (strain ATCC BAA-1151 / DSM 17278 / SZ) (Geobacter lovleyi) protein is 3-methyl-2-oxobutanoate hydroxymethyltransferase.